The chain runs to 353 residues: Nicotinate-nucleotide--dimethylbenzimidazole phosphoribosyltransferase (353 aa).

The active-site Proton acceptor is the glutamate 320.

It belongs to the CobT family.

It carries out the reaction 5,6-dimethylbenzimidazole + nicotinate beta-D-ribonucleotide = alpha-ribazole 5'-phosphate + nicotinate + H(+). It participates in nucleoside biosynthesis; alpha-ribazole biosynthesis; alpha-ribazole from 5,6-dimethylbenzimidazole: step 1/2. Catalyzes the synthesis of alpha-ribazole-5'-phosphate from nicotinate mononucleotide (NAMN) and 5,6-dimethylbenzimidazole (DMB). The protein is Nicotinate-nucleotide--dimethylbenzimidazole phosphoribosyltransferase of Syntrophotalea carbinolica (strain DSM 2380 / NBRC 103641 / GraBd1) (Pelobacter carbinolicus).